A 231-amino-acid chain; its full sequence is 7-cyano-7-deazaguanine synthase (231 aa).

Residue phenylalanine 8–leucine 18 participates in ATP binding. Positions 188, 197, 200, and 203 each coordinate Zn(2+).

The protein belongs to the QueC family. It depends on Zn(2+) as a cofactor.

It catalyses the reaction 7-carboxy-7-deazaguanine + NH4(+) + ATP = 7-cyano-7-deazaguanine + ADP + phosphate + H2O + H(+). It functions in the pathway purine metabolism; 7-cyano-7-deazaguanine biosynthesis. Functionally, catalyzes the ATP-dependent conversion of 7-carboxy-7-deazaguanine (CDG) to 7-cyano-7-deazaguanine (preQ(0)). The chain is 7-cyano-7-deazaguanine synthase from Shigella flexneri serotype 5b (strain 8401).